We begin with the raw amino-acid sequence, 284 residues long: Homeobox protein SMOX-5 (284 aa).

A DNA-binding region (homeobox) is located at residues 37–96; sequence RRKTRTTFSNCQLNELENNFNRQRYLTPTDRDRIAKHLGLTNTQVITWFQNRRAKLKREA. A disordered region spans residues 117 to 172; it reads LSLSDHDHEETQIDDENEQGDNNNDDDGDDNDVEEDDGEEQEKNHTKYLTQPPSIS. Acidic residues predominate over residues 128–156; that stretch reads QIDDENEQGDNNNDDDGDDNDVEEDDGEE.

Its subcellular location is the nucleus. This Schistosoma mansoni (Blood fluke) protein is Homeobox protein SMOX-5 (SMOX-5).